The following is a 192-amino-acid chain: Mitochondrial import inner membrane translocase subunit TIM18 (192 aa).

The transit peptide at 1-42 (MLLFPGLKPVLNASTVIVNPVRAVFPGLVLSTKRSFYSINRL) directs the protein to the mitochondrion. The Mitochondrial matrix portion of the chain corresponds to 43 to 88 (NAENKINDIANTSKEASSSVQMFKPPEFSQFKDSYQKDYERIAKYT). Residues 89 to 109 (LIPLTMVPFYASFTGGVINPL) traverse the membrane as a helical segment. Over 110–113 (LDAS) the chain is Mitochondrial intermembrane. Residues 114-134 (LSSIFLIYLQYGFTSCIIDYI) traverse the membrane as a helical segment. The Mitochondrial matrix segment spans residues 135–144 (PKEKYPRWHK). The chain crosses the membrane as a helical span at residues 145-165 (LALYCLYGGSMLSLYGIYELE). The Mitochondrial intermembrane segment spans residues 166–192 (TKNNGFVDLVKKLWNENDDHLYIFGRN).

Belongs to the CybS family. As to quaternary structure, component of the TIM22 complex, whose core is composed of TIM18, TIM22 and TIM54, associated with the peripheral proteins MRS5/TIM12 and the 70 kDa heterohexamer composed of TIM9 and TIM10 (or TIM8 and TIM13).

The protein resides in the mitochondrion inner membrane. Component of the TIM22 complex, a complex that mediates the import and insertion of multi-pass transmembrane proteins into the mitochondrial inner membrane. The TIM22 complex forms a twin-pore translocase that uses the membrane potential as external driving force. Its role in the complex is unclear but it may be involved in the assembly and stabilization of the TIM22 complex. The polypeptide is Mitochondrial import inner membrane translocase subunit TIM18 (TIM18) (Saccharomyces cerevisiae (strain ATCC 204508 / S288c) (Baker's yeast)).